A 267-amino-acid polypeptide reads, in one-letter code: Tryptophan synthase alpha chain (267 aa).

Residues E43 and D54 each act as proton acceptor in the active site.

It belongs to the TrpA family. As to quaternary structure, tetramer of two alpha and two beta chains.

It catalyses the reaction (1S,2R)-1-C-(indol-3-yl)glycerol 3-phosphate + L-serine = D-glyceraldehyde 3-phosphate + L-tryptophan + H2O. Its pathway is amino-acid biosynthesis; L-tryptophan biosynthesis; L-tryptophan from chorismate: step 5/5. Functionally, the alpha subunit is responsible for the aldol cleavage of indoleglycerol phosphate to indole and glyceraldehyde 3-phosphate. The polypeptide is Tryptophan synthase alpha chain (Bacillus subtilis (strain 168)).